The primary structure comprises 476 residues: Arginine biosynthesis bifunctional protein ArgJ, mitochondrial (476 aa).

Substrate is bound by residues threonine 193, lysine 219, threonine 237, glutamate 337, asparagine 471, and serine 476. The active-site Nucleophile is threonine 237.

This sequence belongs to the ArgJ family. Heterodimer of an alpha and a beta chain. The alpha and beta chains are autoproteolytically processed from a single precursor protein within the mitochondrion.

The protein resides in the mitochondrion matrix. It carries out the reaction N(2)-acetyl-L-ornithine + L-glutamate = N-acetyl-L-glutamate + L-ornithine. It catalyses the reaction L-glutamate + acetyl-CoA = N-acetyl-L-glutamate + CoA + H(+). Its pathway is amino-acid biosynthesis; L-arginine biosynthesis; L-ornithine and N-acetyl-L-glutamate from L-glutamate and N(2)-acetyl-L-ornithine (cyclic): step 1/1. It participates in amino-acid biosynthesis; L-arginine biosynthesis; N(2)-acetyl-L-ornithine from L-glutamate: step 1/4. Catalyzes two activities which are involved in the cyclic version of arginine biosynthesis: the synthesis of acetylglutamate from glutamate and acetyl-CoA, and of ornithine by transacetylation between acetylornithine and glutamate. The polypeptide is Arginine biosynthesis bifunctional protein ArgJ, mitochondrial (Cryptococcus neoformans var. neoformans serotype D (strain B-3501A) (Filobasidiella neoformans)).